Reading from the N-terminus, the 353-residue chain is Guanine nucleotide-binding protein subunit alpha (353 aa).

Residue Gly-2 is the site of N-myristoyl glycine attachment. A lipid anchor (S-palmitoyl cysteine) is attached at Cys-3. The region spanning 33-353 (NEIKMLLLGA…QLHLRECGLL (321 aa)) is the G-alpha domain. The segment at 36-49 (KMLLLGAGESGKST) is G1 motif. GTP is bound by residues Glu-44, Ser-45, Gly-46, Lys-47, Ser-48, Thr-49, Asp-150, Leu-175, Thr-181, Gly-203, Asn-269, Lys-270, Asp-272, and Ala-325. Ser-48 contributes to the Mg(2+) binding site. The tract at residues 173–181 (DILRSRVKT) is G2 motif. Thr-181 lines the Mg(2+) pocket. Residues 196-205 (YKLFDVGGQR) are G3 motif. A G4 motif region spans residues 265–272 (ILFLNKID). The interval 323–328 (TCATDT) is G5 motif.

The protein belongs to the G-alpha family. G(q) subfamily. In terms of assembly, g proteins are composed of 3 units; alpha, beta and gamma. The alpha chain contains the guanine nucleotide binding site. Mg(2+) serves as cofactor.

In terms of biological role, guanine nucleotide-binding proteins (G proteins) are involved as modulators or transducers in various transmembrane signaling systems. The polypeptide is Guanine nucleotide-binding protein subunit alpha (CGP1) (Coprinellus congregatus (Inky cap fungus)).